The sequence spans 160 residues: Endoribonuclease YbeY (160 aa).

Residues H121, H125, and H131 each contribute to the Zn(2+) site.

It belongs to the endoribonuclease YbeY family. The cofactor is Zn(2+).

It localises to the cytoplasm. Functionally, single strand-specific metallo-endoribonuclease involved in late-stage 70S ribosome quality control and in maturation of the 3' terminus of the 16S rRNA. The sequence is that of Endoribonuclease YbeY from Syntrophus aciditrophicus (strain SB).